The following is a 681-amino-acid chain: MGDIERTDARFEVISEYEPAGDQPAAIEELDARLSRGERDVVLLGATGTGKSATAAWLIEQQQRPTLVMAPNKTLAAQLANELRQLLPNNAVEYFVSYYDYYQPEAYIAQTDTYIEKDSSINDDVERLRHRATSSLLSRRDVVVVSSVSCIYGLGTPQSYLDRSVVLRVDEEVERDRFLRLLVDIQYDRNDVGFTRGTFRVKGDTVDIIPAYEEVAVRVEFFGDDIDALYYIHPLTGDVIRQVDEVRIFPATHYVAGPERMAKAVEDIKAELRDRLEDLENRGKLLEAQRLRMRTEYDLEMIEQVGFCSGIENYSRHLDGRPAGSAPATLLDYFPEDFLTIIDESHVTVPQIGGMFEGDMSRKRNLVEFGFRLPSALDNRPLKWEEFEQRVGQTVYMSATPGDYELAASGGEYVEQVIRPTGLVDPEIDVRPTRGQIDDLIHEIKQRTTKDERVLVTTLTKKMAEDLTDYLLENGIRVRYLHSDIDTLQRVELLRQLRLGEYDVLVGINLLREGLDLPEVSLVAILDADKEGFLRSTKSLIQTIGRAARNVSGTVIMYADKITDSMQYAIDETERRREKQIAYNKEHGIDPQPLRKKIADILEQVQESKAESTAPSSDAVVVSKTNTSSMPVAELRSLIDDLTTQMGTAARELKFELAGRLRDEIAELKKELRGMEEIGLA.

The Helicase ATP-binding domain maps to 32–419; that stretch reads ARLSRGERDV…GGEYVEQVIR (388 aa). 45 to 52 contacts ATP; the sequence is GATGTGKS. Positions 98–121 match the Beta-hairpin motif; the sequence is YYDYYQPEAYIAQTDTYIEKDSSI. Residues 436-602 enclose the Helicase C-terminal domain; that stretch reads QIDDLIHEIK…PLRKKIADIL (167 aa). A compositionally biased stretch (polar residues) spans 607-616; it reads ESKAESTAPS. The disordered stretch occupies residues 607–626; that stretch reads ESKAESTAPSSDAVVVSKTN. One can recognise a UVR domain in the interval 636 to 671; that stretch reads RSLIDDLTTQMGTAARELKFELAGRLRDEIAELKKE.

It belongs to the UvrB family. As to quaternary structure, forms a heterotetramer with UvrA during the search for lesions. Interacts with UvrC in an incision complex.

The protein localises to the cytoplasm. The UvrABC repair system catalyzes the recognition and processing of DNA lesions. A damage recognition complex composed of 2 UvrA and 2 UvrB subunits scans DNA for abnormalities. Upon binding of the UvrA(2)B(2) complex to a putative damaged site, the DNA wraps around one UvrB monomer. DNA wrap is dependent on ATP binding by UvrB and probably causes local melting of the DNA helix, facilitating insertion of UvrB beta-hairpin between the DNA strands. Then UvrB probes one DNA strand for the presence of a lesion. If a lesion is found the UvrA subunits dissociate and the UvrB-DNA preincision complex is formed. This complex is subsequently bound by UvrC and the second UvrB is released. If no lesion is found, the DNA wraps around the other UvrB subunit that will check the other stand for damage. The sequence is that of UvrABC system protein B from Corynebacterium diphtheriae (strain ATCC 700971 / NCTC 13129 / Biotype gravis).